We begin with the raw amino-acid sequence, 543 residues long: Probable protein kinase UbiB (543 aa).

The Protein kinase domain occupies Asp123–Leu501. ATP contacts are provided by residues Leu129–Val137 and Lys152. Asp287 acts as the Proton acceptor in catalysis. The chain crosses the membrane as a helical span at residues Met517–Ala537.

The protein belongs to the ABC1 family. UbiB subfamily.

Its subcellular location is the cell inner membrane. It participates in cofactor biosynthesis; ubiquinone biosynthesis [regulation]. Its function is as follows. Is probably a protein kinase regulator of UbiI activity which is involved in aerobic coenzyme Q (ubiquinone) biosynthesis. This Edwardsiella ictaluri (strain 93-146) protein is Probable protein kinase UbiB.